The sequence spans 390 residues: MQMMQRNVVGQRPVAGSRRSLVVANVAEVTRPAVSTNGKHRTGVPEGTPIVTPQDLPSRPRRNRRSESFRASVREVNVSPANFILPIFIHEESNQNVPIASMPGINRLAYGKNVIDYVAEPRSYGVNQVVVFPKTPDHLKTQTAEEAFNKNGLSQRTIRLLKDSFPDLEVYTDVALDPYNSDGHDGIVSDAGVILNDETIEYLCRQAVSQAEAGADVVSPSDMMDGRVGAIRRALDREGFTNVSIMSYTAKYASAYYGPFRDALASAPKPGQAHRRIPPNKKTYQMDPANYREAIREAKADEAEGADIMMVKPGMPYLDVVRLLRETSPLPVAVYHVSGEYAMLKAAAERGWLNEKDAVLEAMTCFRRAGGDLILTYYGIEASKWLAGEK.

The transit peptide at 1–24 directs the protein to the chloroplast; that stretch reads MQMMQRNVVGQRPVAGSRRSLVVA. Residues 34–69 form a disordered region; that stretch reads VSTNGKHRTGVPEGTPIVTPQDLPSRPRRNRRSESF. Residue lysine 251 is the Schiff-base intermediate with substrate of the active site. Residues arginine 261 and lysine 281 each coordinate 5-aminolevulinate. Glutamate 297 lines the Mg(2+) pocket. Lysine 312 functions as the Schiff-base intermediate with substrate in the catalytic mechanism. 5-aminolevulinate contacts are provided by serine 338 and tyrosine 377.

The protein belongs to the ALAD family. Homooctamer. Mg(2+) serves as cofactor.

It is found in the plastid. The protein resides in the chloroplast. It carries out the reaction 2 5-aminolevulinate = porphobilinogen + 2 H2O + H(+). Its pathway is porphyrin-containing compound metabolism; protoporphyrin-IX biosynthesis; coproporphyrinogen-III from 5-aminolevulinate: step 1/4. Catalyzes an early step in the biosynthesis of tetrapyrroles. Binds two molecules of 5-aminolevulinate per subunit, each at a distinct site, and catalyzes their condensation to form porphobilinogen. The chain is Delta-aminolevulinic acid dehydratase, chloroplastic (HEMB) from Chlamydomonas reinhardtii (Chlamydomonas smithii).